A 258-amino-acid polypeptide reads, in one-letter code: Coiled-coil domain-containing protein 107 (258 aa).

Residues 1–24 (MASVVSLAGTLGLLLVSALPEVLG) form the signal peptide. A compositionally biased stretch (basic and acidic residues) spans 25-35 (DRRSPDRRAHP). The tract at residues 25–63 (DRRSPDRRAHPGDAGQVGPAAAEPRRQSPPSKNQRERAR) is disordered. Residues 66–86 (ALPLGALYTAAAVAFVLYKCL) traverse the membrane as a helical segment. Residues 106–134 (LQSEQHLAQLTQQLVQTEQHLNSLMAQLD) are a coiled coil. Residues 203 to 222 (EPLNWNTGTRNLTPPREMQP) form a disordered region.

It localises to the membrane. The polypeptide is Coiled-coil domain-containing protein 107 (CCDC107) (Bos taurus (Bovine)).